Here is a 138-residue protein sequence, read N- to C-terminus: MISLTDTQKIGMGLTGFGVFFLFFGMILFFDKALLAIGNVLFVAGLAFVIGLERTFRFFFQKHKMKATGFFLGGVFVVLIGWPLIGMIFEIYGFFLLFRGFFPVVVGFIRRVPVLGSLLNLPGIRSFVDKVGESNNMV.

An N-acetylmethionine modification is found at Met-1. The Cytoplasmic segment spans residues 1-9; the sequence is MISLTDTQK. Residues 10-30 traverse the membrane as a helical segment; the sequence is IGMGLTGFGVFFLFFGMILFF. Topologically, residues 31–32 are lumenal; it reads DK. The chain crosses the membrane as a helical span at residues 33–53; the sequence is ALLAIGNVLFVAGLAFVIGLE. The Cytoplasmic segment spans residues 54-68; sequence RTFRFFFQKHKMKAT. Residues 69 to 89 traverse the membrane as a helical segment; it reads GFFLGGVFVVLIGWPLIGMIF. Glu-90 is a topological domain (lumenal). A helical transmembrane segment spans residues 91-109; the sequence is IYGFFLLFRGFFPVVVGFI. The Cytoplasmic segment spans residues 110–138; the sequence is RRVPVLGSLLNLPGIRSFVDKVGESNNMV.

It belongs to the GOT1 family.

Its subcellular location is the golgi apparatus membrane. In terms of biological role, may be involved in fusion of ER-derived transport vesicles with the Golgi complex. In Bos taurus (Bovine), this protein is Vesicle transport protein GOT1B.